A 298-amino-acid polypeptide reads, in one-letter code: N-acetylmuramic acid 6-phosphate etherase (298 aa).

One can recognise an SIS domain in the interval cysteine 54–lysine 217. The Proton donor role is filled by glutamate 82. Glutamate 113 is an active-site residue.

Belongs to the GCKR-like family. MurNAc-6-P etherase subfamily. Homodimer.

The catalysed reaction is N-acetyl-D-muramate 6-phosphate + H2O = N-acetyl-D-glucosamine 6-phosphate + (R)-lactate. It participates in amino-sugar metabolism; N-acetylmuramate degradation. Specifically catalyzes the cleavage of the D-lactyl ether substituent of MurNAc 6-phosphate, producing GlcNAc 6-phosphate and D-lactate. In Petrotoga mobilis (strain DSM 10674 / SJ95), this protein is N-acetylmuramic acid 6-phosphate etherase.